Consider the following 519-residue polypeptide: Exodeoxyribonuclease 7 large subunit (519 aa).

The tract at residues 500–519 (VGRGKTRKPKEEPPAQGSLL) is disordered.

The protein belongs to the XseA family. Heterooligomer composed of large and small subunits.

Its subcellular location is the cytoplasm. It carries out the reaction Exonucleolytic cleavage in either 5'- to 3'- or 3'- to 5'-direction to yield nucleoside 5'-phosphates.. Bidirectionally degrades single-stranded DNA into large acid-insoluble oligonucleotides, which are then degraded further into small acid-soluble oligonucleotides. The sequence is that of Exodeoxyribonuclease 7 large subunit from Cereibacter sphaeroides (strain ATCC 17023 / DSM 158 / JCM 6121 / CCUG 31486 / LMG 2827 / NBRC 12203 / NCIMB 8253 / ATH 2.4.1.) (Rhodobacter sphaeroides).